The chain runs to 630 residues: Transcription factor MYC1 (630 aa).

Disordered regions lie at residues 356–398 (FGDS…NNEE) and 430–463 (VKEA…EAER). A compositionally biased stretch (basic residues) spans 440-449 (KPRKRGRKPA). Residues 450–463 (NGREEPLNHVEAER) show a composition bias toward basic and acidic residues. The segment at 453–466 (EEPLNHVEAERQRR) is basic motif; degenerate. The 50-residue stretch at 453–502 (EEPLNHVEAERQRREKLNQRFYALRAVVPNVSKMDKASLLGDAIAYINEL) folds into the bHLH domain. A helix-loop-helix motif region spans residues 467-502 (EKLNQRFYALRAVVPNVSKMDKASLLGDAIAYINEL).

Highly expressed in trichomes and at lower levels in leaves and flowers. Expressed at low levels in roots, stems, leaves, flowers and fruits.

It is found in the nucleus. Its function is as follows. Transcriptional activator that binds to the G-box motif (5'-AACGTG-3') found in a number of promoters of jasmonate-induced genes. Transcription activator involved in the transcriptional regulation of terpene biosynthesis in glandular trichomes. Binds to the promoter of the linalool synthase TPS5 and promotes TPS5 gene transactivation. Acts synergistically with EOT1 in the transactivation of TPS5. Involved in type VI glandular trichome development. Involved in the activation of terpene synthases required for volatile mono- and sesquiterpenes synthesis by the glandular cells of type VI trichomes. This is Transcription factor MYC1 from Solanum lycopersicum (Tomato).